Consider the following 599-residue polypeptide: ATP-dependent rRNA helicase SPB4 (599 aa).

A Q motif motif is present at residues 7–35 (WDTLDYTLQPWIRTAVDAMGYETMTPVQA). Positions 38–224 (IPLFARNKDV…KTGMRNPVKV (187 aa)) constitute a Helicase ATP-binding domain. 51–58 (SVTGSGKT) lines the ATP pocket. Positions 172–175 (DEAD) match the DEAD box motif. A Helicase C-terminal domain is found at 248–415 (KLQLLLTLLN…GLPEIIRAWI (168 aa)). Residues 501–561 (QREKARKLAK…LKRKAIEEKL (61 aa)) adopt a coiled-coil conformation. The interval 559–599 (EKLIENSDDSDNEVETDWKDIVRQRKKKKTNSGMQGDFGDL) is disordered. The span at 564–573 (NSDDSDNEVE) shows a compositional bias: acidic residues.

The protein belongs to the DEAD box helicase family. DDX55/SPB4 subfamily. In terms of assembly, component of pre-60S ribosomal complexes.

Its subcellular location is the nucleus. The protein resides in the nucleolus. The catalysed reaction is ATP + H2O = ADP + phosphate + H(+). ATP-binding RNA helicase involved in the biogenesis of 60S ribosomal subunits. Binds 90S pre-ribosomal particles and dissociates from pre-60S ribosomal particles after processing of 27SB pre-rRNA. Required for the normal formation of 18S rRNA through the processing of pre-rRNAs at sites A0, A1 and A2, and the normal formation of 25S and 5.8S rRNAs through the processing of pre-rRNAs at sites C1 and C2. The protein is ATP-dependent rRNA helicase SPB4 of Eremothecium gossypii (strain ATCC 10895 / CBS 109.51 / FGSC 9923 / NRRL Y-1056) (Yeast).